Reading from the N-terminus, the 193-residue chain is Thymidine kinase (193 aa).

ATP-binding positions include 16 to 23 and 89 to 92; these read GPMFSGKS and DEIQ. The active-site Proton acceptor is E90. Positions 146, 149, 184, and 187 each coordinate Zn(2+).

It belongs to the thymidine kinase family. Homotetramer.

The protein localises to the cytoplasm. It catalyses the reaction thymidine + ATP = dTMP + ADP + H(+). The chain is Thymidine kinase from Caldanaerobacter subterraneus subsp. tengcongensis (strain DSM 15242 / JCM 11007 / NBRC 100824 / MB4) (Thermoanaerobacter tengcongensis).